Here is a 422-residue protein sequence, read N- to C-terminus: Large ribosomal subunit protein uL4 (422 aa).

Ala-2 carries the post-translational modification N-acetylalanine. Lys-14 carries the N6-acetyllysine modification. At Arg-97 the chain carries Omega-N-methylarginine. An N6-acetyllysine modification is found at Lys-106. Lys-239 participates in a covalent cross-link: Glycyl lysine isopeptide (Lys-Gly) (interchain with G-Cter in SUMO2). Lys-259 is subject to N6-acetyllysine. Thr-266 is subject to Phosphothreonine. Phosphoserine occurs at positions 290 and 295. Position 300 is a citrulline (Arg-300). Lys-327 is covalently cross-linked (Glycyl lysine isopeptide (Lys-Gly) (interchain with G-Cter in SUMO2)). Lys-333 and Lys-353 each carry N6-acetyllysine. The tract at residues 359–422 (EAKSDQKGVQ…PTSEEKKAAA (64 aa)) is disordered. An N6-acetyllysine; alternate modification is found at Lys-361. Lys-361 participates in a covalent cross-link: Glycyl lysine isopeptide (Lys-Gly) (interchain with G-Cter in SUMO1); alternate. Position 362 is a phosphoserine (Ser-362). Composition is skewed to basic and acidic residues over residues 376-385 (NKEKKAVGDK) and 402-422 (PAAE…KAAA).

The protein belongs to the universal ribosomal protein uL4 family. As to quaternary structure, component of the large ribosomal subunit. May bind IPO9 with low affinity. Interacts with RBM3. In terms of processing, citrullinated by PADI4.

Its subcellular location is the cytoplasm. Component of the large ribosomal subunit. The ribosome is a large ribonucleoprotein complex responsible for the synthesis of proteins in the cell. The sequence is that of Large ribosomal subunit protein uL4 (RPL4) from Bos taurus (Bovine).